The sequence spans 116 residues: Large ribosomal subunit protein uL18 (116 aa).

The protein belongs to the universal ribosomal protein uL18 family. In terms of assembly, part of the 50S ribosomal subunit; part of the 5S rRNA/L5/L18/L25 subcomplex. Contacts the 5S and 23S rRNAs.

This is one of the proteins that bind and probably mediate the attachment of the 5S RNA into the large ribosomal subunit, where it forms part of the central protuberance. This chain is Large ribosomal subunit protein uL18, found in Shewanella halifaxensis (strain HAW-EB4).